Reading from the N-terminus, the 442-residue chain is Xaa-Pro dipeptidase (442 aa).

The Mn(2+) site is built by Asp-245, Asp-256, His-338, Glu-383, and Glu-422.

Belongs to the peptidase M24B family. Bacterial-type prolidase subfamily. Requires Mn(2+) as cofactor.

The enzyme catalyses Xaa-L-Pro dipeptide + H2O = an L-alpha-amino acid + L-proline. In terms of biological role, splits dipeptides with a prolyl residue in the C-terminal position. This is Xaa-Pro dipeptidase from Sodalis glossinidius (strain morsitans).